We begin with the raw amino-acid sequence, 95 residues long: Protein YY1 (95 aa).

An N-terminal signal peptide occupies residues 1–26; it reads MAVTRTALLVVLVAGAMTMTMRGAEA. Intrachain disulfides connect C31–C72, C41–C61, C62–C87, and C74–C94.

Belongs to the A9/FIL1 family. As to expression, anther.

The protein resides in the secreted. The polypeptide is Protein YY1 (Oryza sativa subsp. japonica (Rice)).